A 151-amino-acid chain; its full sequence is DNA-directed RNA polymerase RPB6 homolog (151 aa).

A compositionally biased stretch (acidic residues) spans 20-44 (ETEEENFVDSEEESEDKSEDKDEIV). The disordered stretch occupies residues 20-46 (ETEEENFVDSEEESEDKSEDKDEIVES).

This sequence belongs to the archaeal RpoK/eukaryotic RPB6 RNA polymerase subunit family. In terms of assembly, part of the viral DNA-directed RNA polymerase that consists of 8 polII-like subunits (RPB1, RPB2, RPB3, RPB5, RPB6, RPB7, RPB9, RPB10), a capping enzyme and a termination factor.

The protein resides in the host cytoplasm. It is found in the virion. Component of the DNA-directed RNA polymerase (RNAP) that catalyzes the transcription in the cytoplasm of viral DNA into RNA using the four ribonucleoside triphosphates as substrates. In African swine fever virus (isolate Tick/Malawi/Lil 20-1/1983) (ASFV), this protein is DNA-directed RNA polymerase RPB6 homolog.